Reading from the N-terminus, the 822-residue chain is MEENPLQCTICKNEFEEPILLSCQHTTCRKCSTGSPSCKSCSPIPSTSRSHTPHPDKLAAFLLDASKEEMEECANCEQISLPMFYCETCQQSLCLVCRNVTHQARMFSSHKIISSDERSKVYSSSLCKDHNEPYILYCSDVRKLVCIQCFNGRPLEERHSFISIEQGHRLCLERIEQSAAKLRFYQSERQEELNVRQRVLDENASNFDDARASLYQLCQQIIDTVMTTRETLAKELVKQQEQSDEQCKRQIKEIEAVMGPVRLCLFSAQILCTTASKLDVLQLCPQLQKRIGVLLDKTIDKLPVSSTPDSIEVRSDLAKALEPFLGMSAAWCPISVSREGSSSNSYKRGSGSHKAISMLSKFQATIDLAGAFGELFGKVEHPLRQLVTALSSTSQQVLETQRDLTIRRCIIEKEDVEKLVKTCKKIEAGLGMHSAALDGMQSEMQEIWQEQLDRVRRQQIIYREKVEEILNLRETARQILTAAKQLVPYVSCILNMNAMIDPKRCHPPDPAPMESICLEITGIEPNSQNRILAIEKEEENRRLNQEAKKKEELAGQSAVMKTLKHGKIKRKEMNRMMLNTNRERSPGGTDTALTSPCIRRLTTALKEETASELDAEEFLDEIFELSGEQYDEVVDGTLTEEDRCSSALLLSMEISSDSISPLPSLEQLLGRIPLASRVTSNIGFSRGAMLQSLNDVFALQKPPTPENISVSEERNVLASAVRNAEKRKSGAGLPTNSDKDEVIEKEEIEKETEKEKKKVIRRRVKKVSEPSEEEVTTFTFNAPPDCPFVPQEIFESDEKLGTFEAKERVLQSLKQKMNQKTE.

An RING-type zinc finger spans residues 8 to 42; that stretch reads CTICKNEFEEPILLSCQHTTCRKCSTGSPSCKSCS. The segment at 68–115 adopts a B box-type 1; atypical zinc-finger fold; sequence EEMEECANCEQISLPMFYCETCQQSLCLVCRNVTHQARMFSSHKIISS. The Zn(2+) site is built by Cys-73, Cys-76, Cys-97, and His-102. The B box-type 2; degenerate zinc-finger motif lies at 122-164; it reads YSSSLCKDHNEPYILYCSDVRKLVCIQCFNGRPLEERHSFISI. Coiled-coil stretches lie at residues 526 to 558 and 738 to 769; these read NSQNRILAIEKEEENRRLNQEAKKKEELAGQSA and DKDEVIEKEEIEKETEKEKKKVIRRRVKKVSE.

This chain is Probable RING finger protein 207 homolog, found in Caenorhabditis elegans.